The primary structure comprises 240 residues: Tetrahydromethanopterin S-methyltransferase subunit A (240 aa).

Residues M1–K218 lie on the Cytoplasmic side of the membrane. Position 85 (H85) interacts with 5-hydroxybenzimidazolylcob(I)amide. A helical transmembrane segment spans residues F219 to G239. R240 is a topological domain (extracellular).

Belongs to the MtrA family. As to quaternary structure, the complex is composed of 8 subunits; MtrA, MtrB, MtrC, MtrD, MtrE, MtrF, MtrG and MtrH. 5-hydroxybenzimidazolylcob(I)amide is required as a cofactor.

It is found in the cell membrane. The catalysed reaction is 5-methyl-5,6,7,8-tetrahydromethanopterin + coenzyme M + 2 Na(+)(in) = 5,6,7,8-tetrahydromethanopterin + methyl-coenzyme M + 2 Na(+)(out). It functions in the pathway one-carbon metabolism; methanogenesis from CO(2); methyl-coenzyme M from 5,10-methylene-5,6,7,8-tetrahydromethanopterin: step 2/2. Functionally, part of a complex that catalyzes the formation of methyl-coenzyme M and tetrahydromethanopterin from coenzyme M and methyl-tetrahydromethanopterin. This is an energy-conserving, sodium-ion translocating step. The sequence is that of Tetrahydromethanopterin S-methyltransferase subunit A from Methanohalophilus mahii (strain ATCC 35705 / DSM 5219 / SLP).